A 747-amino-acid polypeptide reads, in one-letter code: AT-rich interactive domain-containing protein 4 (747 aa).

The segment at 454 to 475 (PLPTRKRSEPCRESKEIENGGP) is disordered. Residues 459-471 (KRSEPCRESKEIE) are compositionally biased toward basic and acidic residues. The ARID domain occupies 566–670 (VCSEEEFLRD…YLLEYEYAHD (105 aa)). The segment at 674–730 (GECCLICRSSTAGDWVNCGSCGEWAHFGCDRRPGLGAFKDYAKTDGLEYVCPNCSVS) adopts a PHD-type zinc-finger fold.

It localises to the nucleus. The chain is AT-rich interactive domain-containing protein 4 (ARID4) from Arabidopsis thaliana (Mouse-ear cress).